A 212-amino-acid chain; its full sequence is Large ribosomal subunit protein uL3 (212 aa).

Residues 130–158 form a disordered region; that stretch reads KRGSMTHGSKNHRLPGSTGAGTTPGRVYP.

It belongs to the universal ribosomal protein uL3 family. As to quaternary structure, part of the 50S ribosomal subunit. Forms a cluster with proteins L14 and L19.

Functionally, one of the primary rRNA binding proteins, it binds directly near the 3'-end of the 23S rRNA, where it nucleates assembly of the 50S subunit. The chain is Large ribosomal subunit protein uL3 from Gloeothece citriformis (strain PCC 7424) (Cyanothece sp. (strain PCC 7424)).